The chain runs to 276 residues: Cell division protein FtsQ (276 aa).

Residues 1–27 lie on the Cytoplasmic side of the membrane; that stretch reads MSQAALNTRNSEEEVSSRRNNGTRLAG. The helical transmembrane segment at 28–48 threads the bilayer; it reads ILFLLTVLTTVLVSGWVVLGW. The Periplasmic portion of the chain corresponds to 49 to 276; sequence MEDAQRLPLS…QQNQAQAEQQ (228 aa). The POTRA domain occupies 55–126; the sequence is LPLSKLVLTG…DELKIHLVEY (72 aa). The disordered stretch occupies residues 255–276; sequence GWAPLPPEESTQQQNQAQAEQQ. Residues 266–276 show a composition bias toward low complexity; sequence QQQNQAQAEQQ.

Belongs to the FtsQ/DivIB family. FtsQ subfamily. Part of a complex composed of FtsB, FtsL and FtsQ. The complex can be formed before its localization to the division site. This tripartite complex can be divided further into a subcomplex of FtsB and FtsL, which forms in the absence of FtsQ. Interacts with FtsA, FtsK, FtsL, FtsB, FtsW, FtsI, FtsN, FtsX and YmgF.

Its subcellular location is the cell inner membrane. Its function is as follows. Essential cell division protein. May link together the upstream cell division proteins, which are predominantly cytoplasmic, with the downstream cell division proteins, which are predominantly periplasmic. May control correct divisome assembly. The chain is Cell division protein FtsQ from Escherichia coli (strain K12).